A 357-amino-acid polypeptide reads, in one-letter code: Alanine racemase (357 aa).

Lysine 35 (proton acceptor; specific for D-alanine) is an active-site residue. N6-(pyridoxal phosphate)lysine is present on lysine 35. Residue arginine 130 participates in substrate binding. The active-site Proton acceptor; specific for L-alanine is tyrosine 255. Methionine 303 contributes to the substrate binding site.

The protein belongs to the alanine racemase family. It depends on pyridoxal 5'-phosphate as a cofactor.

The enzyme catalyses L-alanine = D-alanine. The protein operates within amino-acid biosynthesis; D-alanine biosynthesis; D-alanine from L-alanine: step 1/1. Functionally, catalyzes the interconversion of L-alanine and D-alanine. May also act on other amino acids. The chain is Alanine racemase (alr) from Nitrosospira multiformis (strain ATCC 25196 / NCIMB 11849 / C 71).